A 303-amino-acid chain; its full sequence is Probable cell division protein WhiA (303 aa).

The H-T-H motif DNA-binding region spans Ser-272–Leu-303.

Belongs to the WhiA family.

Involved in cell division and chromosome segregation. This is Probable cell division protein WhiA from Streptococcus pyogenes serotype M3 (strain ATCC BAA-595 / MGAS315).